The sequence spans 913 residues: MFNCDVTAIDLTPMPLFSADNMTTAFLSTDTSVVEKSLFGIPEWLLQINDDISRALERGVNIRQLVSARACVIDDLLIELFKCFGLDKTDLALFATGGYGRGELSLHSDIDILLLMPHDINADTSSKIDNLVALLWDIGLEPALSVRSVSDCLEAALDHTIASALLEARLLIGNDALQNVPHQIVNNQWSPRSFYDVKIDEAKARYLQHNATEYNLEPNIKTAPGGLRDIHIIGWVTKRYFRVSKLYDLVQQNFLTEKEFDELSFSENYLWQIRHYLHELTGRNENKLLFDYQREIAQLMGYDTQTDDQPNAAVERFMRDYYRCAMQISTLSEMLTNHYYETIIEAQLPDEERPKKQPINARFNQVGDQIAMAHHRVFAQHPESILEMFLLMGQYGIKNVRTHTLRALKIAARGIDQAYRDNPTHQTLFLANLKEQNYLFHRLRTMNRYGVLGNYIPAFAQVTGLMQYDLFHRYTVDAHTLFLIRILHRFTDPHFYEDFPLVSSIFQRIERKEILVLAAMFHDIAKGRGGNHSQLGEIESIEFCLAHGMSTADANLVGWLTRYHLLMSMTAQKKDISDPEVVTLFADLVGNVTHLNHLYVLTVADMNATNPQLWNSWRATLMKQLYSQTRRILRADIDAPTNRQDMISATRKQALVMLDNVDNQHMNRDEVLRLWDDLGDEYFLREIAEDILWHTEAILNHPPIGRASNADSPPLVVLREHRELALDAVQVFVYTQDQVNLFAVTMAVFDQMNLDVLDARIITATRDFALDSYVLLDRSGTLLVDSDSQQELKQRLIDAFKNPTAPKLTHKRIPRQLKHFDVATTINFDFNDASNQHIMSLETLDQPGLLARVGQVFLQQQIEVHAARITTLGERAEDMFYISDQNDQALSADKLKTLKTALIDSLSVRNDRV.

Residues 1 to 358 (MFNCDVTAID…PDEERPKKQP (358 aa)) are uridylyltransferase. The uridylyl-removing stretch occupies residues 359–729 (INARFNQVGD…EHRELALDAV (371 aa)). Residues 476 to 592 (VDAHTLFLIR…TLFADLVGNV (117 aa)) form the HD domain. 2 ACT domains span residues 730-815 (QVFV…RIPR) and 838-913 (IMSL…NDRV).

Belongs to the GlnD family. It depends on Mg(2+) as a cofactor.

It catalyses the reaction [protein-PII]-L-tyrosine + UTP = [protein-PII]-uridylyl-L-tyrosine + diphosphate. The enzyme catalyses [protein-PII]-uridylyl-L-tyrosine + H2O = [protein-PII]-L-tyrosine + UMP + H(+). Uridylyltransferase (UTase) activity is inhibited by glutamine, while glutamine activates uridylyl-removing (UR) activity. In terms of biological role, modifies, by uridylylation and deuridylylation, the PII regulatory proteins (GlnB and homologs), in response to the nitrogen status of the cell that GlnD senses through the glutamine level. Under low glutamine levels, catalyzes the conversion of the PII proteins and UTP to PII-UMP and PPi, while under higher glutamine levels, GlnD hydrolyzes PII-UMP to PII and UMP (deuridylylation). Thus, controls uridylylation state and activity of the PII proteins, and plays an important role in the regulation of nitrogen assimilation and metabolism. The sequence is that of Bifunctional uridylyltransferase/uridylyl-removing enzyme from Psychrobacter cryohalolentis (strain ATCC BAA-1226 / DSM 17306 / VKM B-2378 / K5).